A 220-amino-acid polypeptide reads, in one-letter code: Probable chemoreceptor glutamine deamidase CheD 2 (220 aa).

The protein belongs to the CheD family.

The catalysed reaction is L-glutaminyl-[protein] + H2O = L-glutamyl-[protein] + NH4(+). Its function is as follows. Probably deamidates glutamine residues to glutamate on methyl-accepting chemotaxis receptors (MCPs), playing an important role in chemotaxis. The polypeptide is Probable chemoreceptor glutamine deamidase CheD 2 (Methanosarcina acetivorans (strain ATCC 35395 / DSM 2834 / JCM 12185 / C2A)).